The primary structure comprises 98 residues: Large ribosomal subunit protein uL23c (98 aa).

This sequence belongs to the universal ribosomal protein uL23 family. As to quaternary structure, part of the 50S ribosomal subunit.

The protein resides in the plastid. It localises to the chloroplast. Binds to 23S rRNA. The protein is Large ribosomal subunit protein uL23c (rpl23) of Thalassiosira pseudonana (Marine diatom).